The chain runs to 66 residues: Phylloseptin-H8 (66 aa).

The first 22 residues, 1-22 (MAFLKKSLFLVLFLGLVSLSIC), serve as a signal peptide directing secretion. The propeptide occupies 23–44 (EEEKRETEEEENDQEEDDKSEE). The interval 25–44 (EKRETEEEENDQEEDDKSEE) is disordered. Positions 30–41 (EEEENDQEEDDK) are enriched in acidic residues. Leu65 bears the Leucine amide mark.

As to expression, expressed by the skin glands.

The protein resides in the secreted. Its function is as follows. Has antimicrobial activity. The sequence is that of Phylloseptin-H8 from Pithecopus hypochondrialis (Orange-legged leaf frog).